Here is a 189-residue protein sequence, read N- to C-terminus: Mercury resistance operon ORF3 (189 aa).

A signal peptide (tat-type signal) is located at residues 1 to 27 (MTSPSPTARRTRLRRRTALALAAAATA). Residues 38–189 (TKANTPATRA…IQDALKKAGA (152 aa)) enclose the Thioredoxin domain.

Predicted to be exported by the Tat system. The position of the signal peptide cleavage has not been experimentally proven.

It is found in the secreted. Probable mercury binding protein. In Streptomyces lividans, this protein is Mercury resistance operon ORF3.